Here is a 189-residue protein sequence, read N- to C-terminus: Imidazoleglycerol-phosphate dehydratase (189 aa).

It belongs to the imidazoleglycerol-phosphate dehydratase family.

The protein resides in the cytoplasm. The enzyme catalyses D-erythro-1-(imidazol-4-yl)glycerol 3-phosphate = 3-(imidazol-4-yl)-2-oxopropyl phosphate + H2O. Its pathway is amino-acid biosynthesis; L-histidine biosynthesis; L-histidine from 5-phospho-alpha-D-ribose 1-diphosphate: step 6/9. The chain is Imidazoleglycerol-phosphate dehydratase from Nautilia profundicola (strain ATCC BAA-1463 / DSM 18972 / AmH).